Reading from the N-terminus, the 113-residue chain is Con-Ins G3b (113 aa).

Residues 1-21 (MTTSFYFLLVALGLLLYVCQS) form the signal peptide. Residues 22–29 (SFGNQHTR) constitute a propeptide that is removed on maturation. At Pro34 the chain carries 4-hydroxyproline; partial. 3 disulfides stabilise this stretch: Cys38–Cys99, Cys50–Cys112, and Cys98–Cys103. Glu41 is modified (4-carboxyglutamate). His51 is subject to Histidine amide. A propeptide spans 52–92 (GKRNDAGKKRGRASPLWQRQGFLSMLKAKRNEAFFLQRDGR) (c peptide). Glu96 carries the 4-carboxyglutamate modification. Position 102 is a 4-hydroxyproline; partial (Pro102).

It belongs to the insulin family. As to quaternary structure, heterodimer of A and B chains; disulfide-linked. In terms of processing, it is noteworthy that in this dimer, in contrast to Con-Ins G1, the chain B is amidated and not the chain A. As to expression, expressed by the venom gland.

The protein resides in the secreted. Functionally, this venom insulin, from a fish-hunting cone snail, facilitates prey capture by rapidly inducing hypoglycemic shock. It is one of the smallest known insulin found in nature and lacks the C-terminal segment of the B chain that, in human insulin, mediates engagement of the insulin receptor (INSR) and assembly of the hormone's hexameric storage form. Despite lacking this segment, it both binds and activates human insulin receptor (long isoform (HIR-B)) with only a 10-fold lower potency. In vivo, intraperitoneal injection of this peptide into zebrafish lowers blood glucose with the same potency than human insulin. In addition, when applied to water, this peptide reduces overall locomotor activity of zebrafish larvae, observed as a significant decrease in the percentage of time spent swimming and movement frequency. This chain is Con-Ins G3b, found in Conus geographus (Geography cone).